A 140-amino-acid chain; its full sequence is MRLTYFLTVIVVATLHAGGTALATAEAPNHAAIVNVASADNVHSLDTTAEIGGRMLRKVKEDTVSKKDHEERGPGAILERQTAFVKKLFSRQNAIVNRAQGAFQRQNAFVNRDQGAFQRQNAFVKRAIQRQNHFKLSDNA.

The N-terminal stretch at 1–21 (MRLTYFLTVIVVATLHAGGTA) is a signal peptide. The RxLR-dEER motif lies at 54–72 (RMLRKVKEDTVSKKDHEER). The stretch at 100-113 (QGAFQRQNAFVNRD) is one ADA2-binding IR1 repeat. The stretch at 114–127 (QGAFQRQNAFVKRA) is one ADA2-binding IR2 repeat.

This sequence belongs to the RxLR effector family. As to quaternary structure, interacts with host histone acetyl transferase SAGA complex subunit ADA2.

The protein resides in the secreted. The protein localises to the host nucleus. It is found in the host cytoplasm. Effector that suppresses plant defense responses during the early stages of pathogen infection. Suppresses cell death induced by effectors and PAMPs in plant hosts. Acts as a modulator of histone acetyltransferase (HAT) in plants. Avh23 binds to the ADA2 subunit of the HAT complex SAGA and disrupts its assembly by interfering with the association of ADA2 with the catalytic subunit GCN5. As such, Avh23 suppresses H3K9 acetylation mediated by the ADA2/GCN5 module and increases plant susceptibility. This chain is RxLR effector protein Avh23, found in Phytophthora sojae (Soybean stem and root rot agent).